The following is a 325-amino-acid chain: Elongation factor P--(R)-beta-lysine ligase (325 aa).

Position 76-78 (serine 76–glutamate 78) interacts with substrate. Residues arginine 100 to glutamate 102 and asparagine 109 each bind ATP. Tyrosine 118 is a binding site for substrate. Position 244–245 (glutamate 244–leucine 245) interacts with ATP. Substrate is bound at residue glutamate 251. Glycine 300 is an ATP binding site.

Belongs to the class-II aminoacyl-tRNA synthetase family. EpmA subfamily. In terms of assembly, homodimer.

The catalysed reaction is D-beta-lysine + L-lysyl-[protein] + ATP = N(6)-((3R)-3,6-diaminohexanoyl)-L-lysyl-[protein] + AMP + diphosphate + H(+). Functionally, with EpmB is involved in the beta-lysylation step of the post-translational modification of translation elongation factor P (EF-P). Catalyzes the ATP-dependent activation of (R)-beta-lysine produced by EpmB, forming a lysyl-adenylate, from which the beta-lysyl moiety is then transferred to the epsilon-amino group of a conserved specific lysine residue in EF-P. This Yersinia enterocolitica serotype O:8 / biotype 1B (strain NCTC 13174 / 8081) protein is Elongation factor P--(R)-beta-lysine ligase.